Reading from the N-terminus, the 246-residue chain is Pyridoxine 5'-phosphate synthase (246 aa).

N8 and R19 together coordinate 3-amino-2-oxopropyl phosphate. H44 acts as the Proton acceptor in catalysis. 2 residues coordinate 1-deoxy-D-xylulose 5-phosphate: R46 and H51. Catalysis depends on E76, which acts as the Proton acceptor. T106 provides a ligand contact to 1-deoxy-D-xylulose 5-phosphate. The active-site Proton donor is H198. 3-amino-2-oxopropyl phosphate contacts are provided by residues D199 and 221–222 (GH).

Belongs to the PNP synthase family. As to quaternary structure, homooctamer; tetramer of dimers.

The protein localises to the cytoplasm. The catalysed reaction is 3-amino-2-oxopropyl phosphate + 1-deoxy-D-xylulose 5-phosphate = pyridoxine 5'-phosphate + phosphate + 2 H2O + H(+). It functions in the pathway cofactor biosynthesis; pyridoxine 5'-phosphate biosynthesis; pyridoxine 5'-phosphate from D-erythrose 4-phosphate: step 5/5. Catalyzes the complicated ring closure reaction between the two acyclic compounds 1-deoxy-D-xylulose-5-phosphate (DXP) and 3-amino-2-oxopropyl phosphate (1-amino-acetone-3-phosphate or AAP) to form pyridoxine 5'-phosphate (PNP) and inorganic phosphate. In Brucella suis (strain ATCC 23445 / NCTC 10510), this protein is Pyridoxine 5'-phosphate synthase.